An 801-amino-acid polypeptide reads, in one-letter code: Phenylalanine--tRNA ligase beta subunit (801 aa).

In terms of domain architecture, tRNA-binding spans 39-152; the sequence is ARAFSGVVVG…TDAPIGTDIR (114 aa). One can recognise a B5 domain in the interval 407-482; sequence PARAPITLPI…RIYGYDNIPS (76 aa). 4 residues coordinate Mg(2+): aspartate 460, aspartate 466, glutamate 469, and glutamate 470. The FDX-ACB domain occupies 706–799; the sequence is SKFPQVRRDI…LTVEHSAQLR (94 aa).

This sequence belongs to the phenylalanyl-tRNA synthetase beta subunit family. Type 1 subfamily. In terms of assembly, tetramer of two alpha and two beta subunits. Mg(2+) serves as cofactor.

It localises to the cytoplasm. The catalysed reaction is tRNA(Phe) + L-phenylalanine + ATP = L-phenylalanyl-tRNA(Phe) + AMP + diphosphate + H(+). The sequence is that of Phenylalanine--tRNA ligase beta subunit from Psychrobacter arcticus (strain DSM 17307 / VKM B-2377 / 273-4).